The primary structure comprises 571 residues: Proline--tRNA ligase (571 aa).

Belongs to the class-II aminoacyl-tRNA synthetase family. ProS type 1 subfamily. Homodimer.

It is found in the cytoplasm. The enzyme catalyses tRNA(Pro) + L-proline + ATP = L-prolyl-tRNA(Pro) + AMP + diphosphate. In terms of biological role, catalyzes the attachment of proline to tRNA(Pro) in a two-step reaction: proline is first activated by ATP to form Pro-AMP and then transferred to the acceptor end of tRNA(Pro). As ProRS can inadvertently accommodate and process non-cognate amino acids such as alanine and cysteine, to avoid such errors it has two additional distinct editing activities against alanine. One activity is designated as 'pretransfer' editing and involves the tRNA(Pro)-independent hydrolysis of activated Ala-AMP. The other activity is designated 'posttransfer' editing and involves deacylation of mischarged Ala-tRNA(Pro). The misacylated Cys-tRNA(Pro) is not edited by ProRS. In Vibrio campbellii (strain ATCC BAA-1116), this protein is Proline--tRNA ligase.